Consider the following 375-residue polypeptide: Glycogen synthase kinase-3 homolog YGK3 (375 aa).

Positions 41–329 (VREGKRIGHG…ARQLMAHEFF (289 aa)) constitute a Protein kinase domain. Residues 47 to 55 (IGHGSFGTV) and K74 each bind ATP. Residue D173 is the Proton acceptor of the active site. At S211 the chain carries Phosphoserine.

This sequence belongs to the protein kinase superfamily. Ser/Thr protein kinase family.

The enzyme catalyses L-seryl-[protein] + ATP = O-phospho-L-seryl-[protein] + ADP + H(+). It carries out the reaction L-threonyl-[protein] + ATP = O-phospho-L-threonyl-[protein] + ADP + H(+). In terms of biological role, required for heat stress-instigated phosphorylation of BCY1 which is involved in cell wall integrity signaling. Regulates activity of MSN2, a transcription factor that binds to the stress-response element (STRE). Probably promotes formation of a complex between MSN2 and DNA. Regulates the stability of ROG1. In Saccharomyces cerevisiae (strain ATCC 204508 / S288c) (Baker's yeast), this protein is Glycogen synthase kinase-3 homolog YGK3 (YGK3).